A 305-amino-acid polypeptide reads, in one-letter code: Glutaminase (305 aa).

Positions 61, 113, 158, 165, 189, 241, and 259 each coordinate substrate.

Belongs to the glutaminase family. In terms of assembly, homotetramer.

It catalyses the reaction L-glutamine + H2O = L-glutamate + NH4(+). In Clostridium botulinum (strain 657 / Type Ba4), this protein is Glutaminase.